The chain runs to 787 residues: Mitochondrial 15S rRNA processing factor CCM1 (787 aa).

The transit peptide at 1-12 (MMLRLSVKKRCM) directs the protein to the mitochondrion. Basic residues predominate over residues 38 to 48 (QKGKPTLRKSK). Residues 38–58 (QKGKPTLRKSKGSNDGGAVNN) form a disordered region. 3 PPR repeats span residues 286–320 (SRET…KLEP), 321–356 (SQKT…SQKT), and 359–393 (DTRA…KIEI).

The protein belongs to the CCM1 family. In terms of assembly, binds to mitochondrial small subunit 15S rRNA.

The protein localises to the mitochondrion. Its function is as follows. Regulates mitochondrial small subunit maturation by controlling 15S rRNA 5'-end processing. Localizes to the 5' precursor of the 15S rRNA in a position that is subsequently occupied by mS47 in the mature yeast mtSSU. Uses structure and sequence-specific RNA recognition, binding to a single-stranded region of the precursor and specifically recognizing bases -6 to -1. The exchange of Ccm1 for mS47 is coupled to the irreversible removal of precursor rRNA that is accompanied by conformational changes of the mitoribosomal proteins uS5m and mS26. These conformational changes signal completion of 5'-end rRNA processing through protection of the mature 5'-end of the 15S rRNA and stabilization of mS47. The removal of the 5' precursor together with the dissociation of Ccm1 may be catalyzed by the 5'-3' exoribonuclease Pet127. Involved in the specific removal of group I introns in mitochondrial encoded transcripts. The chain is Mitochondrial 15S rRNA processing factor CCM1 (CCM1) from Debaryomyces hansenii (strain ATCC 36239 / CBS 767 / BCRC 21394 / JCM 1990 / NBRC 0083 / IGC 2968) (Yeast).